We begin with the raw amino-acid sequence, 114 residues long: Pancreatic progenitor cell differentiation and proliferation factor (114 aa).

Phosphoserine is present on Ser-9. Disordered stretches follow at residues 22–47 (GSTS…PGLP) and 75–114 (AEHS…GPPS). A compositionally biased stretch (low complexity) spans 23-33 (STSSNSSCSST). Positions 102-114 (GGQSSTASAGPPS) are enriched in polar residues.

The protein belongs to the PPDPF family.

In terms of biological role, probable regulator of exocrine pancreas development. This chain is Pancreatic progenitor cell differentiation and proliferation factor (PPDPF), found in Homo sapiens (Human).